The following is a 465-amino-acid chain: MIGAGLAGSEAAWQLAEAGIDVVLHEMRPDRMTEAHRTATPAELVCSNSFRSDDAANNAVGLLHAEMRRLGSLIMRAADANQVPAGGALAVDRDSFAAAVATALQGHPRIELRRGEITGLPPAEWANVIIATGPLTSQPLADAIRALTDESALAFFDAIAPIVHKDTIDMSKAWFQSRYDKVGPGGTGADYINCPMTREQYDAFVAALLAGEKTDFKDWETNTPYFDGCLPIEVMAERGHETLRHGPMKPVGLTNPHDPTVKPYAIVQLRQDNKLGTLYNMVGFQTKLKYGPQQQIFRTIPGLENAEFARLGGLHRNTFLNSPKLLDQQLRLRAQPRLRFAGQMTGCEGYVESASIGLIAGLYAAAEARGASLAAPPPTTALGALLGHITGGHIETIDGATRSFQPMNINFGLFPPLAAAPTKKPDGTRLKGNEKTVAKKQAMSARALADLDRWIAEHLRVAAAA.

3–8 lines the FAD pocket; sequence GAGLAG.

This sequence belongs to the MnmG family. TrmFO subfamily. The cofactor is FAD.

Its subcellular location is the cytoplasm. It catalyses the reaction uridine(54) in tRNA + (6R)-5,10-methylene-5,6,7,8-tetrahydrofolate + NADH + H(+) = 5-methyluridine(54) in tRNA + (6S)-5,6,7,8-tetrahydrofolate + NAD(+). It carries out the reaction uridine(54) in tRNA + (6R)-5,10-methylene-5,6,7,8-tetrahydrofolate + NADPH + H(+) = 5-methyluridine(54) in tRNA + (6S)-5,6,7,8-tetrahydrofolate + NADP(+). Catalyzes the folate-dependent formation of 5-methyl-uridine at position 54 (M-5-U54) in all tRNAs. This Bradyrhizobium sp. (strain ORS 278) protein is Methylenetetrahydrofolate--tRNA-(uracil-5-)-methyltransferase TrmFO.